The sequence spans 371 residues: Alanine dehydrogenase (371 aa).

The substrate site is built by Arg-15 and Lys-74. Residue His-95 is the Proton donor/acceptor of the active site. Residues Ser-133, 177–178 (QA), Asp-197, Ser-219, 238–239 (VL), 266–269 (IAID), and 298–301 (VANM) contribute to the NAD(+) site. Catalysis depends on Asp-269, which acts as the Proton donor/acceptor.

This sequence belongs to the AlaDH/PNT family. As to quaternary structure, homohexamer. Trimer of dimer.

The enzyme catalyses L-alanine + NAD(+) + H2O = pyruvate + NH4(+) + NADH + H(+). Its pathway is amino-acid degradation; L-alanine degradation via dehydrogenase pathway; NH(3) and pyruvate from L-alanine: step 1/1. Its function is as follows. Catalyzes the reversible reductive amination of pyruvate to L-alanine. May play a role in cell wall synthesis as L-alanine is an important constituent of the peptidoglycan layer. This Staphylococcus epidermidis (strain ATCC 35984 / DSM 28319 / BCRC 17069 / CCUG 31568 / BM 3577 / RP62A) protein is Alanine dehydrogenase (ald).